The primary structure comprises 240 residues: UDP-2,3-diacylglucosamine hydrolase (240 aa).

Mn(2+) is bound by residues aspartate 8, histidine 10, aspartate 41, asparagine 79, and histidine 114. Substrate is bound at residue 79–80 (NR). Residues aspartate 122, serine 160, asparagine 164, lysine 167, and histidine 195 each contribute to the substrate site. Residues histidine 195 and histidine 197 each contribute to the Mn(2+) site.

Belongs to the LpxH family. Mn(2+) is required as a cofactor.

Its subcellular location is the cell inner membrane. The catalysed reaction is UDP-2-N,3-O-bis[(3R)-3-hydroxytetradecanoyl]-alpha-D-glucosamine + H2O = 2-N,3-O-bis[(3R)-3-hydroxytetradecanoyl]-alpha-D-glucosaminyl 1-phosphate + UMP + 2 H(+). Its pathway is glycolipid biosynthesis; lipid IV(A) biosynthesis; lipid IV(A) from (3R)-3-hydroxytetradecanoyl-[acyl-carrier-protein] and UDP-N-acetyl-alpha-D-glucosamine: step 4/6. Its function is as follows. Hydrolyzes the pyrophosphate bond of UDP-2,3-diacylglucosamine to yield 2,3-diacylglucosamine 1-phosphate (lipid X) and UMP by catalyzing the attack of water at the alpha-P atom. Involved in the biosynthesis of lipid A, a phosphorylated glycolipid that anchors the lipopolysaccharide to the outer membrane of the cell. The sequence is that of UDP-2,3-diacylglucosamine hydrolase from Escherichia coli O127:H6 (strain E2348/69 / EPEC).